The following is a 556-amino-acid chain: Probable zinc metalloprotease EGY2, chloroplastic (556 aa).

Residues 1–64 constitute a chloroplast transit peptide; that stretch reads MNLAVASFRG…VFRKRETLVR (64 aa). The disordered stretch occupies residues 63–133; sequence VRVTETQTEP…DGDKLEVSSG (71 aa). Helical transmembrane passes span 267–287, 311–331, 336–356, 374–394, 437–457, 484–504, and 527–547; these read AVPE…TLFL, LPGA…HILV, GIKL…FGAI, AAGP…GLFV, PLVI…IPAG, LLGL…LIFF, and LGIL…FAFT.

It belongs to the peptidase M50B family.

Its subcellular location is the plastid. It localises to the chloroplast membrane. Functionally, probable membrane-associated metalloprotease that may be involved in chloroplast development. The protein is Probable zinc metalloprotease EGY2, chloroplastic (EGY2) of Arabidopsis thaliana (Mouse-ear cress).